Consider the following 496-residue polypeptide: Beta-amylase (496 aa).

3 residues coordinate substrate: Asp-54, His-94, and Asp-102. Glu-187 acts as the Proton donor in catalysis. Residues Lys-296, His-301, and Thr-343 each coordinate substrate. Glu-381 serves as the catalytic Proton acceptor. Substrate-binding positions include 382–383 and Arg-421; that span reads NA.

It belongs to the glycosyl hydrolase 14 family.

The enzyme catalyses Hydrolysis of (1-&gt;4)-alpha-D-glucosidic linkages in polysaccharides so as to remove successive maltose units from the non-reducing ends of the chains.. This Trifolium repens (Creeping white clover) protein is Beta-amylase (BMY1).